We begin with the raw amino-acid sequence, 155 residues long: Small ribosomal subunit protein uS17 (155 aa).

Ala2 is subject to N-acetylalanine.

The protein belongs to the universal ribosomal protein uS17 family.

In Drosophila yakuba (Fruit fly), this protein is Small ribosomal subunit protein uS17.